Reading from the N-terminus, the 522-residue chain is Target of rapamycin complex 2 subunit MAPKAP1 (522 aa).

Alanine 2 is modified (N-acetylalanine). Residues 2–184 (AFLDNPTIIL…KKIDVYLPLH (183 aa)) are interaction with MAP3K2. Residues 2-267 (AFLDNPTIIL…GFSTLALVEK (266 aa)) form an interaction with NBN region. Threonine 86 carries the phosphothreonine modification. Phosphoserine is present on residues serine 128, serine 186, serine 315, and serine 356. A CRIM domain is found at 139 to 267 (QSILSVRLEQ…GFSTLALVEK (129 aa)). The SIN1-type RBD stretch occupies residues 279–353 (LFVRINAAHG…QSAWEFCLVR (75 aa)). One can recognise an SIN1-type PH domain in the interval 382-487 (HYKSFKVSMI…IVLKVNYILE (106 aa)). Arginine 393 provides a ligand contact to a 1,2-diacyl-sn-glycero-3-phospho-(1D-myo-inositol-3,4,5-trisphosphate). Phosphothreonine is present on threonine 398. Residues lysine 428 and lysine 464 each coordinate a 1,2-diacyl-sn-glycero-3-phospho-(1D-myo-inositol-3,4,5-trisphosphate). Residues 468–522 (FESDAATVNEIVLKVNYILESRASTARADYFAQKQRKLNRRTSFSFQKEKKSGQQ) are interaction with ATF2. At serine 510 the chain carries Phosphoserine.

This sequence belongs to the SIN1 family. In terms of assembly, component of the mechanistic target of rapamycin complex 2 (mTORC2), consisting in two heterotretramers composed of MTOR, MLST8, RICTOR and MAPKAP1/SIN1. The mTORC2 core complex associates with PRR5/PROTOR1 and/or PRR5L/PROTOR2. Contrary to mTORC1, mTORC2 does not bind to and is not sensitive to FKBP12-rapamycin. Interacts with MAP3K2. Interacts with ATF2. Interacts with MAPK8. Interacts with GTP-bound HRAS and KRAS; inhibiting their activity. Interacts with IFNAR2. Interacts with CCDC28B. As to quaternary structure, interacts with NBN. Phosphorylation at Ser-128 by PKC promotes relocalization to the perinuclear region, where the mTORC2 complex specifically mediates phosphorylation of SGK1. Phosphorylated at Thr-86 by AKT1 or RPS6KB1 in the presence of growth factors; the effect of this phosphorylation is however unclear. According to two studies, phosphorylation at Thr-86 by AKT1 is part of a positive feedback loop that increases mTORC2 activation. According to another study, phosphorylation at Thr-86 and Thr-398 by RPS6KB1 promotes dissociation from the mTORC2 complex, leading to inhibit mTORC2 signaling. In terms of tissue distribution, ubiquitously expressed, with highest levels in heart and skeletal muscle.

It localises to the cell membrane. It is found in the endoplasmic reticulum membrane. The protein resides in the early endosome membrane. Its subcellular location is the late endosome membrane. The protein localises to the lysosome membrane. It localises to the golgi apparatus membrane. It is found in the mitochondrion outer membrane. The protein resides in the cytoplasm. Its subcellular location is the perinuclear region. The protein localises to the nucleus. It localises to the cytosol. Phosphatidylinositol 3,4,5-trisphosphate (PI(3,4,5)P3) promotes MTOR activation by relieving MAPKAP1/SIN1-mediated inhibition of MTOR that takes place in absence of PI(3,4,5)P3. Its function is as follows. Component of the mechanistic target of rapamycin complex 2 (mTORC2), which transduces signals from growth factors to pathways involved in proliferation, cytoskeletal organization, lipogenesis and anabolic output. In response to growth factors, mTORC2 phosphorylates and activates AGC protein kinase family members, including AKT (AKT1, AKT2 and AKT3), PKC (PRKCA, PRKCB and PRKCE) and SGK1. In contrast to mTORC1, mTORC2 is nutrient-insensitive. Within the mTORC2 complex, MAPKAP1/SIN1 acts as a substrate adapter which recognizes and binds AGC protein kinase family members for phosphorylation by MTOR. mTORC2 plays a critical role in AKT1 activation by mediating phosphorylation of different sites depending on the context, such as 'Thr-450', 'Ser-473', 'Ser-477' or 'Thr-479', facilitating the phosphorylation of the activation loop of AKT1 on 'Thr-308' by PDPK1/PDK1 which is a prerequisite for full activation. mTORC2 catalyzes the phosphorylation of SGK1 at 'Ser-422' and of PRKCA on 'Ser-657'. The mTORC2 complex also phosphorylates various proteins involved in insulin signaling, such as FBXW8 and IGF2BP1. mTORC2 acts upstream of Rho GTPases to regulate the actin cytoskeleton, probably by activating one or more Rho-type guanine nucleotide exchange factors. mTORC2 promotes the serum-induced formation of stress-fibers or F-actin. MAPKAP1 inhibits MAP3K2 by preventing its dimerization and autophosphorylation. Inhibits HRAS and KRAS independently of mTORC2 complex. Enhances osmotic stress-induced phosphorylation of ATF2 and ATF2-mediated transcription. Involved in ciliogenesis, regulates cilia length through its interaction with CCDC28B independently of mTORC2 complex. In contrast to isoform 1, isoform 2 and isoform 6, isoform 4 is not a component of the a mTORC2 complex. The polypeptide is Target of rapamycin complex 2 subunit MAPKAP1 (Homo sapiens (Human)).